A 165-amino-acid polypeptide reads, in one-letter code: Nucleotide-binding protein NATL1_05371 (165 aa).

This sequence belongs to the YajQ family.

Functionally, nucleotide-binding protein. The protein is Nucleotide-binding protein NATL1_05371 of Prochlorococcus marinus (strain NATL1A).